Reading from the N-terminus, the 68-residue chain is Large ribosomal subunit protein uL29 (68 aa).

The protein belongs to the universal ribosomal protein uL29 family.

The protein is Large ribosomal subunit protein uL29 of Parvibaculum lavamentivorans (strain DS-1 / DSM 13023 / NCIMB 13966).